A 251-amino-acid chain; its full sequence is Triosephosphate isomerase (251 aa).

9–11 provides a ligand contact to substrate; it reads NWK. Catalysis depends on H95, which acts as the Electrophile. E167 functions as the Proton acceptor in the catalytic mechanism. Residues G173, S212, and 233 to 234 each bind substrate; that span reads GG.

It belongs to the triosephosphate isomerase family. In terms of assembly, homodimer.

Its subcellular location is the cytoplasm. It carries out the reaction D-glyceraldehyde 3-phosphate = dihydroxyacetone phosphate. It functions in the pathway carbohydrate biosynthesis; gluconeogenesis. Its pathway is carbohydrate degradation; glycolysis; D-glyceraldehyde 3-phosphate from glycerone phosphate: step 1/1. In terms of biological role, involved in the gluconeogenesis. Catalyzes stereospecifically the conversion of dihydroxyacetone phosphate (DHAP) to D-glyceraldehyde-3-phosphate (G3P). This Pseudomonas putida (strain W619) protein is Triosephosphate isomerase.